An 816-amino-acid chain; its full sequence is H(+)/Cl(-) exchange transporter 5 (816 aa).

The Cytoplasmic portion of the chain corresponds to 1-124 (MAMWQGAMDN…WALIHSVSDA (124 aa)). Transmembrane regions (helical) follow at residues 125–162 (FSGWLLMLLIGLFSGSLAGLIDISAHWMTDLKEGICTG) and 208–231 (VNYFMYVLWALLFAFLAVSLVKVF). Residues 237-241 (GSGIP) carry the Selectivity filter part_1 motif. Residue serine 238 participates in chloride binding. An intramembrane region (helical) is located at residues 240–247 (IPEIKTIL). Helical transmembrane passes span 256–275 (LGKWTLVIKTITLVLAVSSG) and 281–300 (EGPLVHVACCCGNILCHRFN). The Selectivity filter part_2 motif lies at 279–283 (GKEGP). 2 intramembrane regions (helical) span residues 312 to 324 (VLSAAAAAGVSVA) and 328 to 336 (PIGGVLFSL). 5 helical membrane passes run 348 to 366 (LWRSFFAALVAAFTLRSIN), 389 to 414 (LVPFILLGIFGGLWGALFIRTNIAWC), 422 to 442 (LGKYPVIEVLIVTAITAILAF), 498 to 518 (MWQLALALILKIVITIFTFGM), and 523 to 542 (GLFIPSMAVGAIAGRLLGVG). Positions 523 to 527 (GLFIP) match the Selectivity filter part_3 motif. Phenylalanine 525 is a binding site for chloride. An intramembrane region (helical) is located at residues 570–584 (GLYAMVGAAACLGGV). Positions 585 to 587 (TRM) form an intramembrane region, note=Loop between two helices. The segment at residues 588–599 (TVSLVVIMFELT) is an intramembrane region (helical). Residues 600–604 (GGLEY) constitute an intramembrane region (note=Loop between two helices). The helical transmembrane segment at 605 to 622 (IVPLMAAAMTSKWVADAL) threads the bilayer. The Cytoplasmic segment spans residues 623–816 (GREGIYDAHI…NQDPDSILFN (194 aa)). Chloride is bound at residue tyrosine 628. 2 consecutive CBS domains span residues 656–720 (MKPR…ARKK) and 752–812 (ILDL…DPDS). Residues threonine 666, 687–689 (YSG), and 794–797 (TKKD) each bind ATP.

It belongs to the chloride channel (TC 2.A.49) family. ClC-5/CLCN5 subfamily. In terms of assembly, interacts with NEDD4 and NEDD4L. Post-translationally, ubiquitinated by NEDD4L in the presence of albumin; which promotes endocytosis and proteasomal degradation.

The protein resides in the golgi apparatus membrane. It is found in the endosome membrane. The protein localises to the cell membrane. The enzyme catalyses 2 chloride(in) + H(+)(out) = 2 chloride(out) + H(+)(in). Its function is as follows. Proton-coupled chloride transporter. Functions as antiport system and exchanges chloride ions against protons. Important for normal acidification of the endosome lumen. May play an important role in renal tubular function. The CLC channel family contains both chloride channels and proton-coupled anion transporters that exchange chloride or another anion for protons. The absence of conserved gating glutamate residues is typical for family members that function as channels. The protein is H(+)/Cl(-) exchange transporter 5 (CLCN5) of Oryctolagus cuniculus (Rabbit).